Here is a 449-residue protein sequence, read N- to C-terminus: UDP-N-acetylmuramoylalanine--D-glutamate ligase (449 aa).

Residue glycine 107–threonine 113 coordinates ATP.

This sequence belongs to the MurCDEF family.

It localises to the cytoplasm. The enzyme catalyses UDP-N-acetyl-alpha-D-muramoyl-L-alanine + D-glutamate + ATP = UDP-N-acetyl-alpha-D-muramoyl-L-alanyl-D-glutamate + ADP + phosphate + H(+). It functions in the pathway cell wall biogenesis; peptidoglycan biosynthesis. Its function is as follows. Cell wall formation. Catalyzes the addition of glutamate to the nucleotide precursor UDP-N-acetylmuramoyl-L-alanine (UMA). This Hydrogenovibrio crunogenus (strain DSM 25203 / XCL-2) (Thiomicrospira crunogena) protein is UDP-N-acetylmuramoylalanine--D-glutamate ligase.